Here is a 394-residue protein sequence, read N- to C-terminus: NAD(P)H-quinone oxidoreductase subunit H (394 aa).

The protein belongs to the complex I 49 kDa subunit family. NDH-1 can be composed of about 15 different subunits; different subcomplexes with different compositions have been identified which probably have different functions.

The protein resides in the cellular thylakoid membrane. It catalyses the reaction a plastoquinone + NADH + (n+1) H(+)(in) = a plastoquinol + NAD(+) + n H(+)(out). The catalysed reaction is a plastoquinone + NADPH + (n+1) H(+)(in) = a plastoquinol + NADP(+) + n H(+)(out). NDH-1 shuttles electrons from an unknown electron donor, via FMN and iron-sulfur (Fe-S) centers, to quinones in the respiratory and/or the photosynthetic chain. The immediate electron acceptor for the enzyme in this species is believed to be plastoquinone. Couples the redox reaction to proton translocation, and thus conserves the redox energy in a proton gradient. Cyanobacterial NDH-1 also plays a role in inorganic carbon-concentration. The sequence is that of NAD(P)H-quinone oxidoreductase subunit H from Trichodesmium erythraeum (strain IMS101).